A 305-amino-acid chain; its full sequence is Ribonuclease BN (305 aa).

Zn(2+) is bound by residues His63, His65, Asp67, His68, His141, Asp212, and His270. The active-site Proton acceptor is the Asp67.

This sequence belongs to the RNase Z family. RNase BN subfamily. Homodimer. It depends on Zn(2+) as a cofactor.

Functionally, zinc phosphodiesterase, which has both exoribonuclease and endoribonuclease activities. This is Ribonuclease BN from Proteus mirabilis (strain HI4320).